We begin with the raw amino-acid sequence, 278 residues long: Tryptophan synthase alpha chain (278 aa).

Residues glutamate 49 and aspartate 60 each act as proton acceptor in the active site.

This sequence belongs to the TrpA family. In terms of assembly, tetramer of two alpha and two beta chains.

The catalysed reaction is (1S,2R)-1-C-(indol-3-yl)glycerol 3-phosphate + L-serine = D-glyceraldehyde 3-phosphate + L-tryptophan + H2O. Its pathway is amino-acid biosynthesis; L-tryptophan biosynthesis; L-tryptophan from chorismate: step 5/5. Its function is as follows. The alpha subunit is responsible for the aldol cleavage of indoleglycerol phosphate to indole and glyceraldehyde 3-phosphate. This is Tryptophan synthase alpha chain from Rhodopirellula baltica (strain DSM 10527 / NCIMB 13988 / SH1).